Consider the following 914-residue polypeptide: Probable dipeptidyl-aminopeptidase B (914 aa).

The segment covering 1-10 (MGKSEADEDA) has biased composition (acidic residues). Residues 1-81 (MGKSEADEDA…DQPFLPSRKG (81 aa)) are disordered. The Cytoplasmic segment spans residues 1-89 (MGKSEADEDA…KGSGARARRV (89 aa)). Residues 20–34 (SSSAASQTSSDSGLS) show a composition bias toward low complexity. The helical; Signal-anchor for type II membrane protein transmembrane segment at 90–110 (FWGLLLLCLAGWVLAFVLFLI) threads the bilayer. The Vacuolar portion of the chain corresponds to 111-914 (QGRSGYSATS…FKRALPVFVH (804 aa)). Residues N347 and N638 are each glycosylated (N-linked (GlcNAc...) asparagine). Residue S752 is the Charge relay system of the active site. N-linked (GlcNAc...) asparagine glycosylation is present at N806. Catalysis depends on charge relay system residues D829 and H862.

It belongs to the peptidase S9B family.

It localises to the vacuole membrane. The catalysed reaction is Release of an N-terminal dipeptide, Xaa-Yaa-|-Zaa-, from a polypeptide, preferentially when Yaa is Pro, provided Zaa is neither Pro nor hydroxyproline.. Type IV dipeptidyl-peptidase which removes N-terminal dipeptides sequentially from polypeptides having unsubstituted N-termini provided that the penultimate residue is proline. This is Probable dipeptidyl-aminopeptidase B (dapB) from Aspergillus terreus (strain NIH 2624 / FGSC A1156).